The following is a 427-amino-acid chain: Trigger factor (427 aa).

Residues 163 to 248 form the PPIase FKBP-type domain; sequence GDTVVIDFVG…VHEVKAKEVP (86 aa).

This sequence belongs to the FKBP-type PPIase family. Tig subfamily.

The protein resides in the cytoplasm. The enzyme catalyses [protein]-peptidylproline (omega=180) = [protein]-peptidylproline (omega=0). Its function is as follows. Involved in protein export. Acts as a chaperone by maintaining the newly synthesized protein in an open conformation. Functions as a peptidyl-prolyl cis-trans isomerase. This Streptococcus equi subsp. equi (strain 4047) protein is Trigger factor.